The sequence spans 259 residues: Type III pantothenate kinase (259 aa).

6–13 contacts ATP; the sequence is DTGNTNTV. Substrate is bound at residue 107 to 110; sequence GPDR. The Proton acceptor role is filled by Asp109. Asp129 provides a ligand contact to K(+). Thr132 lines the ATP pocket. Thr184 serves as a coordination point for substrate.

It belongs to the type III pantothenate kinase family. As to quaternary structure, homodimer. The cofactor is NH4(+). It depends on K(+) as a cofactor.

It is found in the cytoplasm. The catalysed reaction is (R)-pantothenate + ATP = (R)-4'-phosphopantothenate + ADP + H(+). Its pathway is cofactor biosynthesis; coenzyme A biosynthesis; CoA from (R)-pantothenate: step 1/5. Catalyzes the phosphorylation of pantothenate (Pan), the first step in CoA biosynthesis. The protein is Type III pantothenate kinase of Paracoccus denitrificans (strain Pd 1222).